A 995-amino-acid chain; its full sequence is MGPHSWLPLFMQLALLGPQWALHFYKVKVFVVPHSHMDVGWLHTVQESMQVYVPDVYNSVVEALTRGKRRRFIAVEQEYFRLWWDGFASAKRKQQVRQLLAEQRLEFVLGGQVMHDEAVTHFDDQILQLTEGHGFLYETFGIRPQFSWQVDPFGASATTPTLLALAGFNGHIISRIDYDLKDTMQHTQGLQFVWRGSRSLEARQEIFTHVLDQYSYCSDGFMWNGSPRFPDRPFDMDYSAVEMPVSQDSMNHYVLNLVDNVNKRAAWFRTQHVLWPWGCDRQFFNASQQFANMDRLMDHINKHTPELGISMQYATLAEYFQAVFAQDVSWQVRDHRDFLPYSSAPEQTWTGFYTSQSGLKRLARRASALLYAGESLFTRYMLSAAHRFLDPAWALTQLQQLRWAVSEVQHHDGITGTHILAVRDMFVEHLTTGMAGVRKLMDSIAQDMPLTHSGPEPGGHVAMVYNPLAWTVTTVITLTVSFPEVSVTDESGRPVLAQVQDSKETPSAYDLHVLTTIPGLSYQHYIIKPIRKAREDSQEAAATVPSTIQFGLKLRRQDGQVGRNLVPVKNSCYTVFLDKDTNLMHSIWERQSNRTVRMSQEFLAYRSVYGYEEAVTSDNYLFTPNGTAEPAWAAVRMEVVEGQLLSEIRQYFYRQANDSDHTYAIYSRLAHGPQDSAGELLCHRIEQEYRVGPLELNHEVVLRTSTSLNTGLVLYSDNNGYQMQRRTYRHDRNNSVSLNYYPMAQSAFIQDGGSRLVLLSEQAHGVSSQGNGQVEVMLHRRLWNKLEWTLQYNLTHDVTSVVRPVLWLLLGPRTLTTGLRQRSGLELQHRPVVLFRELGGTVQNGPGPRKQEPVTLPPSLHLQILSIPGWKYSSNHTVHLKNLQKGHYRRAKADFRRVLLRLHHLYEAGEHQALSRPVTLNLQSVLRGLGSVVAVEERSLTGTWDVNSLHRWSWKTEDGHHHRGSSRRPLPPLRGPNVTIHPKEIRTFFIHFQEQ.

Positions 1–21 are cleaved as a signal peptide; sequence MGPHSWLPLFMQLALLGPQWA. The Zn(2+) site is built by histidine 36, aspartate 38, and aspartate 151. The active-site Nucleophile is the aspartate 151. N-linked (GlcNAc...) asparagine glycosylation is present at asparagine 285. Zn(2+) is bound at residue histidine 411. Asparagine 593, asparagine 625, asparagine 657, asparagine 733, asparagine 793, asparagine 875, and asparagine 977 each carry an N-linked (GlcNAc...) asparagine glycan. Residues 956–977 form a disordered region; it reads TEDGHHHRGSSRRPLPPLRGPN.

This sequence belongs to the glycosyl hydrolase 38 family. Zn(2+) is required as a cofactor. Post-translationally, processed into a 27 kDa fragment localized on the equatorial segment and the apical rim of the head of mature sperm. In terms of tissue distribution, specific to the caput and corpus of the epididymis.

The protein localises to the secreted. It catalyses the reaction Hydrolysis of terminal, non-reducing alpha-D-mannose residues in alpha-D-mannosides.. Its function is as follows. Can digest both p-nitro-phenyl-alpha-D-mannoside and high mannose oligosaccharide (Man(8)-GlcNAc(2)). May be involved in sperm maturation. Has a possible role in specific sperm-egg interaction since sperm surface mannosidase acts like a receptor for mannose-containing oligosaccharides located on the zona pellucida. This chain is Epididymis-specific alpha-mannosidase (MAN2B2), found in Sus scrofa (Pig).